The following is a 483-amino-acid chain: Phosphoenolpyruvate carboxylase (483 aa).

Residues 1–20 are disordered; it reads MKVPRCMSTQHPDNVNPPFF.

It belongs to the PEPCase type 2 family. As to quaternary structure, homotetramer. Mg(2+) is required as a cofactor.

It catalyses the reaction oxaloacetate + phosphate = phosphoenolpyruvate + hydrogencarbonate. Inhibited by NaCl, KCl, ATP, ADP, GTP and aspartate. Unlike E.coli, not regulated by acetyl-CoA. Catalyzes the irreversible beta-carboxylation of phosphoenolpyruvate (PEP) to form oxaloacetate (OAA), a four-carbon dicarboxylic acid source for the tricarboxylic acid cycle. The protein is Phosphoenolpyruvate carboxylase (ppcA) of Methanothermobacter thermautotrophicus (strain ATCC 29096 / DSM 1053 / JCM 10044 / NBRC 100330 / Delta H) (Methanobacterium thermoautotrophicum).